The chain runs to 257 residues: E3 ubiquitin-protein ligase RNF170 (257 aa).

Topologically, residues 1-24 are lumenal; it reads MADNQEGRPYFPLDEGSIIEGVSD. A helical transmembrane segment spans residues 25–45; the sequence is QVIVVVLLSFVAVGSLLYLLL. At 46-200 the chain is on the cytoplasmic side; that stretch reads RNDEQNIHPE…GGLFWMFRIR (155 aa). The RING-type zinc-finger motif lies at 87 to 130; that stretch reads CPVCLQQATFPVETNCGHLFCGSCIIAYWRYGSWLGAINCPICR. A helical membrane pass occupies residues 201–221; it reads IVLCLLGALFYLVSPLDIIPE. A222 is a topological domain (lumenal). A helical membrane pass occupies residues 223-243; it reads VFGLLGFLDDFFVLFLLLIYI. The Cytoplasmic portion of the chain corresponds to 244-257; that stretch reads SIMYREVVTQRLYR.

The protein localises to the endoplasmic reticulum membrane. It catalyses the reaction S-ubiquitinyl-[E2 ubiquitin-conjugating enzyme]-L-cysteine + [acceptor protein]-L-lysine = [E2 ubiquitin-conjugating enzyme]-L-cysteine + N(6)-ubiquitinyl-[acceptor protein]-L-lysine.. It participates in protein modification; protein ubiquitination. E3 ubiquitin-protein ligase that plays an essential role in stimulus-induced inositol 1,4,5-trisphosphate receptor (ITPR) ubiquitination and degradation via the endoplasmic reticulum-associated degradation (ERAD) pathway. Also involved in ITPR turnover in resting cells. The chain is E3 ubiquitin-protein ligase RNF170 (rnf170) from Xenopus tropicalis (Western clawed frog).